Here is a 440-residue protein sequence, read N- to C-terminus: tRNA(Ile)-lysidine synthase (440 aa).

Residue serine 13–serine 18 participates in ATP binding.

It belongs to the tRNA(Ile)-lysidine synthase family.

The protein localises to the cytoplasm. The enzyme catalyses cytidine(34) in tRNA(Ile2) + L-lysine + ATP = lysidine(34) in tRNA(Ile2) + AMP + diphosphate + H(+). Its function is as follows. Ligates lysine onto the cytidine present at position 34 of the AUA codon-specific tRNA(Ile) that contains the anticodon CAU, in an ATP-dependent manner. Cytidine is converted to lysidine, thus changing the amino acid specificity of the tRNA from methionine to isoleucine. The sequence is that of tRNA(Ile)-lysidine synthase from Solibacter usitatus (strain Ellin6076).